We begin with the raw amino-acid sequence, 248 residues long: Probable transcriptional regulatory protein Mpop_0922 (248 aa).

This sequence belongs to the TACO1 family.

The protein resides in the cytoplasm. In Methylorubrum populi (strain ATCC BAA-705 / NCIMB 13946 / BJ001) (Methylobacterium populi), this protein is Probable transcriptional regulatory protein Mpop_0922.